A 360-amino-acid polypeptide reads, in one-letter code: Fe(3+) ions import ATP-binding protein FbpC (360 aa).

The 233-residue stretch at leucine 4 to leucine 236 folds into the ABC transporter domain. Glycine 36–threonine 43 contacts ATP.

The protein belongs to the ABC transporter superfamily. Fe(3+) ion importer (TC 3.A.1.10) family. As to quaternary structure, the complex is composed of two ATP-binding proteins (FbpC), two transmembrane proteins (FbpB) and a solute-binding protein (FbpA).

Its subcellular location is the cell inner membrane. The enzyme catalyses Fe(3+)(out) + ATP + H2O = Fe(3+)(in) + ADP + phosphate + H(+). In terms of biological role, part of the ABC transporter complex FbpABC involved in Fe(3+) ions import. Responsible for energy coupling to the transport system. This chain is Fe(3+) ions import ATP-binding protein FbpC, found in Mesorhizobium japonicum (strain LMG 29417 / CECT 9101 / MAFF 303099) (Mesorhizobium loti (strain MAFF 303099)).